The primary structure comprises 149 residues: Calmodulin-B (149 aa).

The residue at position 2 (alanine 2) is an N-acetylalanine. EF-hand domains are found at residues 8–43, 44–79, 81–116, and 117–149; these read EQIA…LGQN, PTEA…KMKE, DSEE…LGEK, and LTDE…MTCK. Residues aspartate 21, aspartate 23, aspartate 25, threonine 27, glutamate 32, aspartate 57, aspartate 59, asparagine 61, threonine 63, glutamate 68, aspartate 94, aspartate 96, asparagine 98, and glutamate 105 each coordinate Ca(2+). N6,N6,N6-trimethyllysine is present on lysine 116. Ca(2+) contacts are provided by aspartate 130, aspartate 132, aspartate 134, glutamine 136, and glutamate 141.

Belongs to the calmodulin family.

Functionally, calmodulin mediates the control of a large number of enzymes, ion channels and other proteins by Ca(2+). Among the enzymes to be stimulated by the calmodulin-Ca(2+) complex are a number of protein kinases and phosphatases. This chain is Calmodulin-B, found in Halocynthia roretzi (Sea squirt).